The primary structure comprises 186 residues: Elongation factor P (186 aa).

It belongs to the elongation factor P family.

It localises to the cytoplasm. It functions in the pathway protein biosynthesis; polypeptide chain elongation. Involved in peptide bond synthesis. Stimulates efficient translation and peptide-bond synthesis on native or reconstituted 70S ribosomes in vitro. Probably functions indirectly by altering the affinity of the ribosome for aminoacyl-tRNA, thus increasing their reactivity as acceptors for peptidyl transferase. This chain is Elongation factor P, found in Cupriavidus pinatubonensis (strain JMP 134 / LMG 1197) (Cupriavidus necator (strain JMP 134)).